A 380-amino-acid chain; its full sequence is 3-dehydroquinate synthase (380 aa).

It belongs to the archaeal-type DHQ synthase family.

It carries out the reaction 2-amino-2,3,7-trideoxy-D-lyxo-hept-6-ulosonate + NAD(+) + H2O = 3-dehydroquinate + NH4(+) + NADH + H(+). Catalyzes the oxidative deamination and cyclization of 2-amino-3,7-dideoxy-D-threo-hept-6-ulosonic acid (ADH) to yield 3-dehydroquinate (DHQ), which is fed into the canonical shikimic pathway of aromatic amino acid biosynthesis. The polypeptide is 3-dehydroquinate synthase (Methanosarcina mazei (strain ATCC BAA-159 / DSM 3647 / Goe1 / Go1 / JCM 11833 / OCM 88) (Methanosarcina frisia)).